The primary structure comprises 273 residues: Pantothenate synthetase (273 aa).

Residue M27–H34 coordinates ATP. H34 (proton donor) is an active-site residue. A (R)-pantoate-binding site is contributed by Q58. Q58 lines the beta-alanine pocket. Residue G144–D147 coordinates ATP. Q150 is a binding site for (R)-pantoate. ATP contacts are provided by residues V173 and L181–R184.

The protein belongs to the pantothenate synthetase family. As to quaternary structure, homodimer.

The protein resides in the cytoplasm. It carries out the reaction (R)-pantoate + beta-alanine + ATP = (R)-pantothenate + AMP + diphosphate + H(+). It functions in the pathway cofactor biosynthesis; (R)-pantothenate biosynthesis; (R)-pantothenate from (R)-pantoate and beta-alanine: step 1/1. Its function is as follows. Catalyzes the condensation of pantoate with beta-alanine in an ATP-dependent reaction via a pantoyl-adenylate intermediate. The sequence is that of Pantothenate synthetase from Campylobacter hominis (strain ATCC BAA-381 / DSM 21671 / CCUG 45161 / LMG 19568 / NCTC 13146 / CH001A).